Reading from the N-terminus, the 233-residue chain is tRNA (guanine-N(1)-)-methyltransferase (233 aa).

S-adenosyl-L-methionine-binding positions include G121 and 140 to 145 (IGDYIL).

The protein belongs to the RNA methyltransferase TrmD family. Homodimer.

It localises to the cytoplasm. The enzyme catalyses guanosine(37) in tRNA + S-adenosyl-L-methionine = N(1)-methylguanosine(37) in tRNA + S-adenosyl-L-homocysteine + H(+). Specifically methylates guanosine-37 in various tRNAs. This Endomicrobium trichonymphae protein is tRNA (guanine-N(1)-)-methyltransferase.